The chain runs to 175 residues: Ribosome maturation factor RimM (175 aa).

The 75-residue stretch at 93–167 (DDEFYYSDLI…YIIITLPEVI (75 aa)) folds into the PRC barrel domain.

It belongs to the RimM family. As to quaternary structure, binds ribosomal protein uS19.

Its subcellular location is the cytoplasm. Functionally, an accessory protein needed during the final step in the assembly of 30S ribosomal subunit, possibly for assembly of the head region. Essential for efficient processing of 16S rRNA. May be needed both before and after RbfA during the maturation of 16S rRNA. It has affinity for free ribosomal 30S subunits but not for 70S ribosomes. This chain is Ribosome maturation factor RimM, found in Ehrlichia chaffeensis (strain ATCC CRL-10679 / Arkansas).